The chain runs to 295 residues: Tyrosine recombinase XerD (295 aa).

The Core-binding (CB) domain occupies 1 to 85 (MNTIIEEYLN…TIRSFHQFAL (85 aa)). One can recognise a Tyr recombinase domain in the interval 106–289 (KLPDVLEIDE…SKSQIRKMYT (184 aa)). Catalysis depends on residues R146, K170, H241, R244, and H267. Catalysis depends on Y276, which acts as the O-(3'-phospho-DNA)-tyrosine intermediate.

It belongs to the 'phage' integrase family. XerD subfamily. As to quaternary structure, forms a cyclic heterotetrameric complex composed of two molecules of XerC and two molecules of XerD.

It is found in the cytoplasm. Site-specific tyrosine recombinase, which acts by catalyzing the cutting and rejoining of the recombining DNA molecules. The XerC-XerD complex is essential to convert dimers of the bacterial chromosome into monomers to permit their segregation at cell division. It also contributes to the segregational stability of plasmids. This is Tyrosine recombinase XerD from Staphylococcus epidermidis (strain ATCC 35984 / DSM 28319 / BCRC 17069 / CCUG 31568 / BM 3577 / RP62A).